We begin with the raw amino-acid sequence, 158 residues long: Putative gene 52 protein (158 aa).

The sequence is that of Putative gene 52 protein (52) from Bacillus subtilis (Bacteriophage SP01).